The sequence spans 274 residues: Large ribosomal subunit protein uL2cz/uL2cy (274 aa).

2 disordered regions span residues 1 to 21 and 225 to 274; these read MAIH…VDSQ and PVDH…RRSK.

Belongs to the universal ribosomal protein uL2 family. As to quaternary structure, part of the 50S ribosomal subunit.

It is found in the plastid. The protein resides in the chloroplast. The polypeptide is Large ribosomal subunit protein uL2cz/uL2cy (rpl2-A) (Gossypium barbadense (Sea Island cotton)).